Reading from the N-terminus, the 632-residue chain is MLIGHSLHHMRPTAVDSSLPTSATSQTISNTKSRLDPHRVRELTFIGVGSSVAYLLNELNGRFADSGVTTPFLGKVSIVGKDDSWAENVRGKGYINHQTEIISQWDQQVPKYDPNYAARAEFSASNRRQLTRTVELGAEHLKAQVTGISRLDDGCFRINLDNGQILQSRQIVLGTGAGPHTSIWNSVTSHTQAEKRLDNIKLHEQKALRGKVLDLDEFMRASDASPQTFAGKTVVIHGPNAGIDAAERAGELGANAVWFTRSTNPVLLDGNQLKFAPELAKSAIHKVDKLDIRPTKLENGFALRLHYSSLGQDSREPKKVLDADYYVYAMGQDIHKPGSAAAILGSLLDHLEPIYDYDQVYSDQPFKTVIGLQSRGSNSDNGLIIVGAAVAQLATNVQHSYKDHALDRILEEMTRLPEKQTEKLSQMLLEGAPSVQIQTYLKTWQLDSGQPPDKQVLQNQVENYLAARDYFQRQTNEQKGNLDGVAAEVKNQTLTEVASVIVSPQLGTIKASAAALSGLMPAYVANGENNFTTDNRTMLRAGIAARYPNIGNAEASAFIDEVVTLRHLNSQRFIEKVAGEMMDKGAQPLVSLRPPVLGVPASVRTAYEAYLHALNSGAHDGTPLSQRWLPKK.

The disordered stretch occupies residues 13–34; that stretch reads TAVDSSLPTSATSQTISNTKSR. Residues 15–32 show a composition bias toward polar residues; sequence VDSSLPTSATSQTISNTK.

It is found in the secreted. The chain is Effector protein hopAD1 (hopAD1) from Pseudomonas syringae pv. tomato (strain ATCC BAA-871 / DC3000).